Here is a 454-residue protein sequence, read N- to C-terminus: Glutamyl-tRNA(Gln) amidotransferase subunit A (454 aa).

Catalysis depends on charge relay system residues K56 and S131. S155 (acyl-ester intermediate) is an active-site residue.

It belongs to the amidase family. GatA subfamily. Heterotrimer of A, B and C subunits.

It carries out the reaction L-glutamyl-tRNA(Gln) + L-glutamine + ATP + H2O = L-glutaminyl-tRNA(Gln) + L-glutamate + ADP + phosphate + H(+). Functionally, allows the formation of correctly charged Gln-tRNA(Gln) through the transamidation of misacylated Glu-tRNA(Gln) in organisms which lack glutaminyl-tRNA synthetase. The reaction takes place in the presence of glutamine and ATP through an activated gamma-phospho-Glu-tRNA(Gln). The chain is Glutamyl-tRNA(Gln) amidotransferase subunit A from Campylobacter lari (strain RM2100 / D67 / ATCC BAA-1060).